A 1019-amino-acid polypeptide reads, in one-letter code: Collagen alpha-2(VI) chain (1019 aa).

Positions 1-20 (MLQGTCSVLLLWGILGAIQA) are cleaved as a signal peptide. The tract at residues 21–256 (QQQEVISPDT…YKVSCLEIPG (236 aa)) is nonhelical region. The VWFA 1 domain maps to 46 to 234 (HVYFVLDTSE…EIDQDTINRI (189 aa)). Asn140 carries N-linked (GlcNAc...) asparagine glycosylation. The tract at residues 257 to 588 (PSGPKGYRGQ…GEPGPPGDPG (332 aa)) is disordered. A triple-helical region region spans residues 257-590 (PSGPKGYRGQ…PGPPGDPGLT (334 aa)). Low complexity predominate over residues 287–305 (DPGIEGPIGFPGPKGVPGF). The span at 306–318 (KGEKGEFGADGRK) shows a compositional bias: basic and acidic residues. Residue Asn327 is glycosylated (N-linked (GlcNAc...) asparagine). Composition is skewed to basic and acidic residues over residues 365-377 (ERGD…DPGR) and 419-429 (PKGEPGRRGDP). 5 consecutive short sequence motifs (cell attachment site) follow at residues 366-368 (RGD), 426-428 (RGD), 489-491 (RGD), 498-500 (RGD), and 539-541 (RGD). The segment covering 524-557 (PGEKGEPGPRGPEGGRGDFGLKGEPGRKGEKGEP) has biased composition (basic and acidic residues). The span at 559 to 569 (DPGPPGEPGPR) shows a compositional bias: pro residues. The tract at residues 591-1019 (ECDVMTYVRE…FFDRFIRWIC (429 aa)) is nonhelical region. VWFA domains are found at residues 615–805 (DVVF…EDVL) and 833–1014 (DIVF…FDRF). N-linked (GlcNAc...) asparagine glycosylation occurs at Asn630. Position 701 is a phosphothreonine (Thr701). A Phosphoserine modification is found at Ser705. Asn785, Asn897, and Asn954 each carry an N-linked (GlcNAc...) asparagine glycan.

The protein belongs to the type VI collagen family. As to quaternary structure, trimers composed of three different chains: alpha-1(VI), alpha-2(VI), and alpha-3(VI) or alpha-5(VI) or alpha-6(VI). Interacts with CSPG4. Prolines at the third position of the tripeptide repeating unit (G-X-Y) are hydroxylated in some or all of the chains.

The protein localises to the secreted. It is found in the extracellular space. It localises to the extracellular matrix. Its subcellular location is the membrane. Its function is as follows. Collagen VI acts as a cell-binding protein. This chain is Collagen alpha-2(VI) chain (COL6A2), found in Homo sapiens (Human).